A 1773-amino-acid polypeptide reads, in one-letter code: Disco-interacting protein 2 (1773 aa).

Positions 3–110 (HTASLPGYVR…QRHSKKIDFH (108 aa)) constitute a DMAP1-binding domain. Phosphotyrosine occurs at positions 60 and 61. 2 disordered regions span residues 112–185 (QAAM…YHSE) and 198–319 (LKGR…PLSS). Polar residues-rich tracts occupy residues 113 to 125 (AAMSLSSAPQSGN) and 146 to 165 (YQNTREPSAFQNQQSTNNSQ). Basic residues predominate over residues 166–175 (HRQRRTQRKV). A compositionally biased stretch (basic and acidic residues) spans 176 to 185 (THNEKRYHSE). Residues 224–236 (DELDSSTDDESIP) are compositionally biased toward acidic residues. Basic and acidic residues predominate over residues 241 to 253 (SPDKEYNYPRDHI). A compositionally biased stretch (polar residues) spans 272–297 (SMGSQQHARTDVKQNQITNQKYTAPN).

It belongs to the DIP2 family. Interacts with Disco. As to expression, expressed in the developing nervous system. Ubiquitously expressed in the developing brain. Within the mushroom body, a higher level is detected in the core of lobes and peduncle in the late third instar larva. Detected in whole mushroom body neuron structures at 48 hours after puparium formation and during later stages.

It localises to the cell membrane. Its function is as follows. Required for precise axonal bifurcation in mushroom body neurons by suppressing ectopic bifurcation and regulating the guidance of sister axons. May function by regulating expression of tdp1. Acts downstream of the serine/threonine-protein kinase Bsk to modulate the direction of axon projection. May play a role in fatty acid metabolism. The sequence is that of Disco-interacting protein 2 from Drosophila melanogaster (Fruit fly).